A 473-amino-acid polypeptide reads, in one-letter code: ATP synthase subunit beta (473 aa).

An ATP-binding site is contributed by 158–165 (GGAGVGKT).

It belongs to the ATPase alpha/beta chains family. In terms of assembly, F-type ATPases have 2 components, CF(1) - the catalytic core - and CF(0) - the membrane proton channel. CF(1) has five subunits: alpha(3), beta(3), gamma(1), delta(1), epsilon(1). CF(0) has three main subunits: a(1), b(2) and c(9-12). The alpha and beta chains form an alternating ring which encloses part of the gamma chain. CF(1) is attached to CF(0) by a central stalk formed by the gamma and epsilon chains, while a peripheral stalk is formed by the delta and b chains. The F(1)F(0) complex interacts with SpoIIIJ and YqjG; YqgA is found in the same complex.

Its subcellular location is the cell membrane. The protein resides in the membrane raft. The enzyme catalyses ATP + H2O + 4 H(+)(in) = ADP + phosphate + 5 H(+)(out). In terms of biological role, produces ATP from ADP in the presence of a proton gradient across the membrane. The catalytic sites are hosted primarily by the beta subunits. This is ATP synthase subunit beta from Bacillus subtilis (strain 168).